The following is a 184-amino-acid chain: ATP synthase subunit delta (184 aa).

This sequence belongs to the ATPase delta chain family. As to quaternary structure, F-type ATPases have 2 components, F(1) - the catalytic core - and F(0) - the membrane proton channel. F(1) has five subunits: alpha(3), beta(3), gamma(1), delta(1), epsilon(1). F(0) has three main subunits: a(1), b(2) and c(10-14). The alpha and beta chains form an alternating ring which encloses part of the gamma chain. F(1) is attached to F(0) by a central stalk formed by the gamma and epsilon chains, while a peripheral stalk is formed by the delta and b chains.

The protein localises to the cell inner membrane. F(1)F(0) ATP synthase produces ATP from ADP in the presence of a proton or sodium gradient. F-type ATPases consist of two structural domains, F(1) containing the extramembraneous catalytic core and F(0) containing the membrane proton channel, linked together by a central stalk and a peripheral stalk. During catalysis, ATP synthesis in the catalytic domain of F(1) is coupled via a rotary mechanism of the central stalk subunits to proton translocation. In terms of biological role, this protein is part of the stalk that links CF(0) to CF(1). It either transmits conformational changes from CF(0) to CF(1) or is implicated in proton conduction. This is ATP synthase subunit delta from Rickettsia rickettsii (strain Iowa).